We begin with the raw amino-acid sequence, 49 residues long: Small, acid-soluble spore protein K (49 aa).

The disordered stretch occupies residues 1-49 (MRNKAKGFPNQVNHKFEGEPGATDAYASKRPNGETNTRPQERMRASGKR). The span at 39 to 49 (PQERMRASGKR) shows a compositional bias: basic and acidic residues.

The protein belongs to the SspK family.

It localises to the spore core. This chain is Small, acid-soluble spore protein K, found in Bacillus pumilus (strain SAFR-032).